Reading from the N-terminus, the 218-residue chain is Deoxyribose-phosphate aldolase (218 aa).

D89 (proton donor/acceptor) is an active-site residue. The active-site Schiff-base intermediate with acetaldehyde is the K152. K182 (proton donor/acceptor) is an active-site residue.

This sequence belongs to the DeoC/FbaB aldolase family. DeoC type 1 subfamily.

It localises to the cytoplasm. The catalysed reaction is 2-deoxy-D-ribose 5-phosphate = D-glyceraldehyde 3-phosphate + acetaldehyde. Its pathway is carbohydrate degradation; 2-deoxy-D-ribose 1-phosphate degradation; D-glyceraldehyde 3-phosphate and acetaldehyde from 2-deoxy-alpha-D-ribose 1-phosphate: step 2/2. In terms of biological role, catalyzes a reversible aldol reaction between acetaldehyde and D-glyceraldehyde 3-phosphate to generate 2-deoxy-D-ribose 5-phosphate. The polypeptide is Deoxyribose-phosphate aldolase (Kocuria rhizophila (strain ATCC 9341 / DSM 348 / NBRC 103217 / DC2201)).